The primary structure comprises 68 residues: Large ribosomal subunit protein bL35 (68 aa).

It belongs to the bacterial ribosomal protein bL35 family.

In Orientia tsutsugamushi (strain Ikeda) (Rickettsia tsutsugamushi), this protein is Large ribosomal subunit protein bL35.